Consider the following 703-residue polypeptide: Lactococcin-G-processing and transport ATP-binding protein LagD (703 aa).

One can recognise a Peptidase C39 domain in the interval 7–132 (QQDEKDCGVA…KEWTGVLLFP (126 aa)). Cysteine 13 is a catalytic residue. Residues 153-435 (PILIKQKSLF…IINLQVKMQK (283 aa)) enclose the ABC transmembrane type-1 domain. 7 consecutive transmembrane segments (helical) span residues 162–182 (FITI…DNII), 189–209 (TLNI…LFEY), 224–244 (MSIM…FFAT), 267–287 (ATLS…TLAI), 291–311 (QLFL…YVFI), 381–401 (MVIE…YVID), and 409–429 (LITY…IINL). An ABC transporter domain is found at 469-703 (IKLDKVSFSY…EGVYRRLLNA (235 aa)). ATP is bound at residue 502–509 (GVSGSGKS).

This sequence belongs to the ABC transporter superfamily. LagD family. As to quaternary structure, homodimer.

Its subcellular location is the cell membrane. LagD (TC 3.A.1) is involved in processing the signal peptide and probably also in export of the bacteriocin lactococcin G. In Lactococcus lactis subsp. lactis (Streptococcus lactis), this protein is Lactococcin-G-processing and transport ATP-binding protein LagD (lagD).